The primary structure comprises 592 residues: Aspartate--tRNA(Asp/Asn) ligase (592 aa).

Residue E177 coordinates L-aspartate. The tract at residues 201-204 is aspartate; the sequence is QLFK. Residue R223 coordinates L-aspartate. Residues 223–225 and Q232 contribute to the ATP site; that span reads RDE. L-aspartate is bound at residue H451. Residue E485 coordinates ATP. R492 serves as a coordination point for L-aspartate. 537–540 provides a ligand contact to ATP; it reads GLDR.

The protein belongs to the class-II aminoacyl-tRNA synthetase family. Type 1 subfamily. In terms of assembly, homodimer.

The protein resides in the cytoplasm. The catalysed reaction is tRNA(Asx) + L-aspartate + ATP = L-aspartyl-tRNA(Asx) + AMP + diphosphate. Functionally, aspartyl-tRNA synthetase with relaxed tRNA specificity since it is able to aspartylate not only its cognate tRNA(Asp) but also tRNA(Asn). Reaction proceeds in two steps: L-aspartate is first activated by ATP to form Asp-AMP and then transferred to the acceptor end of tRNA(Asp/Asn). The chain is Aspartate--tRNA(Asp/Asn) ligase from Bacillus subtilis (strain 168).